Reading from the N-terminus, the 391-residue chain is MKKVSVLGSTGSIGKKTVDLLLKRKEEYQVEALSANSNFALLAQQANLLNAKYAAISDERFYKDLKEDLLGTNVKVEVGAPGLANVASLPVDLSVIAIVGIAGLEPVIKVIESGTKVIALANKESIVCGGKLLLKKAKERSVQIIPIDSEHNAIFQVLQNDDKCVEKIILTASGGPFLNYSLEQLRNITVNQALSHPTWKMGKKISVDSATMMNKALEIIEAHHLFKISPNRIEAVVHPESIVHGVVVYQDGFSFAVLAETDMEIPIAYALSWPERSTLNYKLDLTKQKKLTFQEPDHKCFSSLKLSMEVLNSSSPHTNSIVLNAANEIAVNEFLKSRIGFLEVVEVVKSTIENFDKYSDINSLSDIISVDFESRILANEIIKSKGICSVE.

NADPH contacts are provided by Thr10, Gly11, Ser12, Ile13, Asn38, and Asn122. Residue Lys123 participates in 1-deoxy-D-xylulose 5-phosphate binding. NADPH is bound at residue Glu124. Asp148 serves as a coordination point for Mn(2+). Residues Ser149, Glu150, Ser173, and His196 each contribute to the 1-deoxy-D-xylulose 5-phosphate site. Glu150 provides a ligand contact to Mn(2+). Residue Gly202 participates in NADPH binding. 1-deoxy-D-xylulose 5-phosphate is bound by residues Ser209, Asn214, Lys215, and Glu218. Mn(2+) is bound at residue Glu218.

It belongs to the DXR family. It depends on Mg(2+) as a cofactor. The cofactor is Mn(2+).

It carries out the reaction 2-C-methyl-D-erythritol 4-phosphate + NADP(+) = 1-deoxy-D-xylulose 5-phosphate + NADPH + H(+). It functions in the pathway isoprenoid biosynthesis; isopentenyl diphosphate biosynthesis via DXP pathway; isopentenyl diphosphate from 1-deoxy-D-xylulose 5-phosphate: step 1/6. In terms of biological role, catalyzes the NADPH-dependent rearrangement and reduction of 1-deoxy-D-xylulose-5-phosphate (DXP) to 2-C-methyl-D-erythritol 4-phosphate (MEP). This is 1-deoxy-D-xylulose 5-phosphate reductoisomerase from Wolbachia pipientis subsp. Culex pipiens (strain wPip).